We begin with the raw amino-acid sequence, 243 residues long: Triosephosphate isomerase (243 aa).

Residue 9-11 participates in substrate binding; the sequence is NWK. H96 (electrophile) is an active-site residue. E165 serves as the catalytic Proton acceptor. Substrate-binding positions include G171, S204, and 225 to 226; that span reads GG.

This sequence belongs to the triosephosphate isomerase family. Homodimer.

It is found in the cytoplasm. It carries out the reaction D-glyceraldehyde 3-phosphate = dihydroxyacetone phosphate. It functions in the pathway carbohydrate biosynthesis; gluconeogenesis. Its pathway is carbohydrate degradation; glycolysis; D-glyceraldehyde 3-phosphate from glycerone phosphate: step 1/1. Its function is as follows. Involved in the gluconeogenesis. Catalyzes stereospecifically the conversion of dihydroxyacetone phosphate (DHAP) to D-glyceraldehyde-3-phosphate (G3P). This is Triosephosphate isomerase from Nostoc punctiforme (strain ATCC 29133 / PCC 73102).